The following is a 313-amino-acid chain: Ribosomal RNA small subunit methyltransferase H (313 aa).

S-adenosyl-L-methionine is bound by residues 35-37 (GGH), Asp-55, Phe-79, Asp-101, and Gln-108.

Belongs to the methyltransferase superfamily. RsmH family.

Its subcellular location is the cytoplasm. It catalyses the reaction cytidine(1402) in 16S rRNA + S-adenosyl-L-methionine = N(4)-methylcytidine(1402) in 16S rRNA + S-adenosyl-L-homocysteine + H(+). Specifically methylates the N4 position of cytidine in position 1402 (C1402) of 16S rRNA. This chain is Ribosomal RNA small subunit methyltransferase H, found in Escherichia coli O7:K1 (strain IAI39 / ExPEC).